Reading from the N-terminus, the 279-residue chain is Protein CMSS1 (279 aa).

A compositionally biased stretch (acidic residues) spans 1–10 (MADDLGDEWW). Residues 1–89 (MADDLGDEWW…DVLAKSEPKP (89 aa)) are disordered. A compositionally biased stretch (polar residues) spans 12–22 (NQPTGAGSSPE). 2 positions are modified to phosphoserine: Ser19 and Ser24. Arg167 carries the omega-N-methylarginine modification. Thr212 carries the post-translational modification Phosphothreonine.

This sequence belongs to the CMS1 family.

The polypeptide is Protein CMSS1 (CMSS1) (Homo sapiens (Human)).